Consider the following 428-residue polypeptide: Glucose-1-phosphate adenylyltransferase (428 aa).

Alpha-D-glucose 1-phosphate-binding positions include Tyr114, Gly179, 194–195, and Ser212; that span reads EK.

It belongs to the bacterial/plant glucose-1-phosphate adenylyltransferase family. Homotetramer.

It carries out the reaction alpha-D-glucose 1-phosphate + ATP + H(+) = ADP-alpha-D-glucose + diphosphate. It functions in the pathway glycan biosynthesis; glycogen biosynthesis. Its function is as follows. Involved in the biosynthesis of ADP-glucose, a building block required for the elongation reactions to produce glycogen. Catalyzes the reaction between ATP and alpha-D-glucose 1-phosphate (G1P) to produce pyrophosphate and ADP-Glc. The sequence is that of Glucose-1-phosphate adenylyltransferase from Yersinia pseudotuberculosis serotype IB (strain PB1/+).